The chain runs to 378 residues: Ribosomal RNA large subunit methyltransferase G (378 aa).

The protein belongs to the methyltransferase superfamily. RlmG family.

The protein localises to the cytoplasm. It catalyses the reaction guanosine(1835) in 23S rRNA + S-adenosyl-L-methionine = N(2)-methylguanosine(1835) in 23S rRNA + S-adenosyl-L-homocysteine + H(+). Its function is as follows. Specifically methylates the guanine in position 1835 (m2G1835) of 23S rRNA. In Salmonella paratyphi A (strain ATCC 9150 / SARB42), this protein is Ribosomal RNA large subunit methyltransferase G.